Consider the following 195-residue polypeptide: Peptidyl-tRNA hydrolase (195 aa).

A tRNA-binding site is contributed by Y17. H22 serves as the catalytic Proton acceptor. The tRNA site is built by Y68, N70, and N116.

The protein belongs to the PTH family. Monomer.

Its subcellular location is the cytoplasm. It catalyses the reaction an N-acyl-L-alpha-aminoacyl-tRNA + H2O = an N-acyl-L-amino acid + a tRNA + H(+). Functionally, hydrolyzes ribosome-free peptidyl-tRNAs (with 1 or more amino acids incorporated), which drop off the ribosome during protein synthesis, or as a result of ribosome stalling. Catalyzes the release of premature peptidyl moieties from peptidyl-tRNA molecules trapped in stalled 50S ribosomal subunits, and thus maintains levels of free tRNAs and 50S ribosomes. This is Peptidyl-tRNA hydrolase from Shewanella baltica (strain OS155 / ATCC BAA-1091).